A 786-amino-acid chain; its full sequence is Pentatricopeptide repeat-containing protein 10, chloroplastic (786 aa).

A disordered region spans residues 1–71; the sequence is MEATGRGLFP…HQTPTPPHSF (71 aa). The transit peptide at 1 to 95 directs the protein to the chloroplast; the sequence is MEATGRGLFP…HPLPTLAAFL (95 aa). Positions 27-36 are enriched in pro residues; the sequence is PAAPPPPSPS. Over residues 37-50 the composition is skewed to low complexity; that stretch reads SLPLDSLLLHLTAP. PPR repeat units lie at residues 137 to 167, 173 to 207, 208 to 243, 244 to 278, 279 to 313, 314 to 348, 349 to 383, 384 to 418, 419 to 453, 454 to 488, 489 to 523, 524 to 558, 560 to 594, 595 to 629, 630 to 664, 666 to 700, 701 to 735, and 736 to 770; these read DASALEMVVRALGREGQHDAVCALLDETPLP, DVRAYTTVLHALSRAGRYERALELFAELRRQGVAP, TLVTYNVVLDVYGRMGRSWPRIVALLDEMRAAGVEP, DGFTASTVIAACCRDGLVDEAVAFFEDLKARGHAP, CVVTYNALLQVFGKAGNYTEALRVLGEMEQNGCQP, DAVTYNELAGTYARAGFFEEAARCLDTMASKGLLP, NAFTYNTVMTAYGNVGKVDEALALFDQMKKTGFVP, NVNTYNLVLGMLGKKSRFTVMLEMLGEMSRSGCTP, NRVTWNTMLAVCGKRGMEDYVTRVLEGMRSCGVEL, SRDTYNTLIAAYGRCGSRTNAFKMYNEMTSAGFTP, CITTYNALLNVLSRQGDWSTAQSIVSKMRTKGFKP, NEQSYSLLLQCYAKGGNVAGIAAIENEVYGSGAVF, SWVILRTLVIANFKCRRLDGMETAFQEVKARGYNP, DLVIFNSMLSIYAKNGMYSKATEVFDSIKRSGLSP, DLITYNSLMDMYAKCSESWEAEKILNQLKCSQTMK, DVVSYNTVINGFCKQGLVKEAQRVLSEMVADGMAP, CAVTYHTLVGGYSSLEMFSEAREVIGYMVQHGLKP, and MELTYRRVVESYCRAKRFEEARGFLSEVSETDLDF.

This sequence belongs to the PPR family. P subfamily. As to quaternary structure, forms homodimers.

It is found in the plastid. The protein resides in the chloroplast stroma. In terms of biological role, involved in chloroplast mRNA stability. Binds specifically to two intergenic RNA regions of similar sequence located in the chloroplast atpH 5'-UTR and psaJ 3'-UTR, and serves as a barrier to RNA decay. Binding to a specific site in the intergenic region of the chloroplast atpH is sufficient to block 5'-3' and 3'-5' exonucleases. Acts as a protein barrier to block mRNA degradation by exonucleases, and defines processed mRNA termini in chloroplasts. Remodels the structure of the atpH ribosome-binding site in a manner that can account for its ability to enhance translation. Stabilizes a RNA 3'-end downstream from psaI. Binds atpH RNA as a monomer. This chain is Pentatricopeptide repeat-containing protein 10, chloroplastic, found in Zea mays (Maize).